A 411-amino-acid polypeptide reads, in one-letter code: Secretion apparatus protein BsaZ (411 aa).

The next 4 helical transmembrane spans lie at 28–48 (IVALIVIATGALAAPALVDLT), 80–100 (IAAPFVLLCAAAGALPSLVQS), 137–157 (ALLYVGVFALTVRVFADLYHA), and 175–195 (IVLTVRLVLLFLLCALPVLIL). Residues 341 to 411 (AANRGGPPPE…APARTGDQNA (71 aa)) form a disordered region. The span at 370–404 (DACADNAFPDDAPPGAAAPNAGSPDSPAPDGGAPA) shows a compositional bias: low complexity.

Belongs to the type III secretion exporter family.

It is found in the cell membrane. Part of the bsa type III secretion system, is involved in the intracellular replication of invading bacteria inside the host cell. Probably necessary for the lysis of the vacuole membrane and escape into the host cell cytoplasm. This is Secretion apparatus protein BsaZ (bsaZ) from Burkholderia mallei (strain NCTC 10247).